An 826-amino-acid chain; its full sequence is Zinc phosphodiesterase ELAC protein 2 (826 aa).

A mitochondrion-targeting transit peptide spans methionine 1–methionine 16. Disordered stretches follow at residues methionine 16–cysteine 51 and glutamate 188–arginine 231. Residues alanine 27–arginine 38 show a composition bias toward basic and acidic residues. Serine 199, serine 208, serine 212, serine 229, serine 618, and serine 736 each carry phosphoserine. A compositionally biased stretch (basic and acidic residues) spans serine 208–leucine 224. The interval glutamate 798–glutamine 826 is disordered. The span at proline 808–alanine 820 shows a compositional bias: basic and acidic residues.

Belongs to the RNase Z family. As to quaternary structure, homodimer. Interacts with PTCD1. Zn(2+) serves as cofactor.

It is found in the mitochondrion. It localises to the mitochondrion matrix. Its subcellular location is the mitochondrion nucleoid. The protein localises to the nucleus. The enzyme catalyses Endonucleolytic cleavage of RNA, removing extra 3' nucleotides from tRNA precursor, generating 3' termini of tRNAs. A 3'-hydroxy group is left at the tRNA terminus and a 5'-phosphoryl group is left at the trailer molecule.. Its function is as follows. Zinc phosphodiesterase, which displays mitochondrial tRNA 3'-processing endonuclease activity. Involved in tRNA maturation, by removing a 3'-trailer from precursor tRNA. Associates with mitochondrial DNA complexes at the nucleoids to initiate RNA processing and ribosome assembly. The sequence is that of Zinc phosphodiesterase ELAC protein 2 (ELAC2) from Pan troglodytes (Chimpanzee).